The following is a 298-amino-acid chain: Zinc-alpha-2-glycoprotein (298 aa).

An N-terminal signal peptide occupies residues 1-20 (MVRMVPVLLSLLLLLGPAVP). Residue glutamine 21 is modified to Pyrrolidone carboxylic acid. A glycan (N-linked (GlcNAc...) (complex) asparagine) is linked at asparagine 109. A glycan (N-linked (GlcNAc...) asparagine) is linked at asparagine 112. Disulfide bonds link cysteine 123–cysteine 186 and cysteine 225–cysteine 280. N-linked (GlcNAc...) (complex) asparagine glycosylation is present at asparagine 128. The Ig-like C1-type domain maps to 207-292 (PSVVVTSHQA…QHSSLAQPLV (86 aa)). Asparagine 259 is a glycosylation site (N-linked (GlcNAc...) asparagine).

Belongs to the MHC class I family. In terms of assembly, interacts with PIP. Post-translationally, N-glycosylated. N-glycan at Asn-128: Hex5HexNAc4. As to expression, blood plasma, seminal plasma, urine, saliva, sweat, epithelial cells of various human glands, liver.

Its subcellular location is the secreted. Functionally, stimulates lipid degradation in adipocytes and causes the extensive fat losses associated with some advanced cancers. May bind polyunsaturated fatty acids. The chain is Zinc-alpha-2-glycoprotein (AZGP1) from Homo sapiens (Human).